Consider the following 209-residue polypeptide: Guanylate kinase (209 aa).

In terms of domain architecture, Guanylate kinase-like spans 7-185 (GNLYIVAAPS…AAMELQSIVI (179 aa)). Position 14–21 (14–21 (APSGGGKT)) interacts with ATP.

It belongs to the guanylate kinase family.

It localises to the cytoplasm. It carries out the reaction GMP + ATP = GDP + ADP. Functionally, essential for recycling GMP and indirectly, cGMP. The polypeptide is Guanylate kinase (Legionella pneumophila (strain Paris)).